A 59-amino-acid polypeptide reads, in one-letter code: Single-pass membrane and coiled-coil domain-containing protein 4 (59 aa).

The disordered stretch occupies residues 1–23 (MRQLKGKPKKETSKDKKERKQAM). Residues 9–22 (KKETSKDKKERKQA) are compositionally biased toward basic and acidic residues. Positions 9–31 (KKETSKDKKERKQAMQEARQQIT) form a coiled coil. The helical transmembrane segment at 32–52 (TVVLPTLAVVVLLIVVFVYVA) threads the bilayer.

This sequence belongs to the SMCO4 family.

It localises to the membrane. This Mus musculus (Mouse) protein is Single-pass membrane and coiled-coil domain-containing protein 4 (Smco4).